The chain runs to 390 residues: Dynein regulatory complex subunit 5 (390 aa).

LRR repeat units follow at residues 182-205, 210-233, and 238-261; these read TETLTHLDLSNNSLDDDKVRMLAS, NLSITHLNLSHNKIADRGVRALAK, and HSVISLLELHDNQIHTEGAESLAR.

This sequence belongs to the DRC5 family. Component of the nexin-dynein regulatory complex (N-DRC). Interacts with DRC1, DRC2, DRC3, DRC4, DRC7 and DRC11.

It localises to the cell projection. Its subcellular location is the cilium. The protein localises to the flagellum. It is found in the cytoplasm. The protein resides in the cytoskeleton. It localises to the flagellum axoneme. Its function is as follows. Component of the nexin-dynein regulatory complex (N-DRC) a key regulator of ciliary/flagellar motility which maintains the alignment and integrity of the distal axoneme and regulates microtubule sliding in motile axonemes. May play a role in the assembly of N-DRC. This is Dynein regulatory complex subunit 5 from Chlamydomonas reinhardtii (Chlamydomonas smithii).